The following is a 177-amino-acid chain: Large ribosomal subunit protein uL6 (177 aa).

It belongs to the universal ribosomal protein uL6 family. As to quaternary structure, part of the 50S ribosomal subunit.

Functionally, this protein binds to the 23S rRNA, and is important in its secondary structure. It is located near the subunit interface in the base of the L7/L12 stalk, and near the tRNA binding site of the peptidyltransferase center. The sequence is that of Large ribosomal subunit protein uL6 from Acinetobacter baumannii (strain SDF).